A 177-amino-acid polypeptide reads, in one-letter code: 2''-aminoglycoside nucleotidyltransferase (177 aa).

Mg(2+)-binding residues include Asp-44, Asp-46, and Asp-86. Residue Asp-86 is the Proton acceptor of the active site.

Requires Mg(2+) as cofactor.

The enzyme catalyses nucleoside triphosphate + gentamicin = diphosphate + 2''-nucleotidylgentamicin.. Its function is as follows. Mediates bacterial resistance to kanamycin, gentamicin, dibekacin, sisomicin, neomycin and tobramycin by adenylating the 2''-hydroxyl group of these antibiotics. This is 2''-aminoglycoside nucleotidyltransferase (aadB) from Klebsiella pneumoniae.